We begin with the raw amino-acid sequence, 324 residues long: Glyoxylate/hydroxypyruvate reductase B (324 aa).

Active-site residues include arginine 237 and glutamate 266. Catalysis depends on histidine 285, which acts as the Proton donor.

This sequence belongs to the D-isomer specific 2-hydroxyacid dehydrogenase family. GhrB subfamily. As to quaternary structure, homodimer.

It localises to the cytoplasm. The catalysed reaction is glycolate + NADP(+) = glyoxylate + NADPH + H(+). It carries out the reaction (R)-glycerate + NAD(+) = 3-hydroxypyruvate + NADH + H(+). It catalyses the reaction (R)-glycerate + NADP(+) = 3-hydroxypyruvate + NADPH + H(+). Functionally, catalyzes the NADPH-dependent reduction of glyoxylate and hydroxypyruvate into glycolate and glycerate, respectively. The sequence is that of Glyoxylate/hydroxypyruvate reductase B from Shigella boydii serotype 4 (strain Sb227).